Here is a 214-residue protein sequence, read N- to C-terminus: ATP phosphoribosyltransferase (214 aa).

It belongs to the ATP phosphoribosyltransferase family. Short subfamily. In terms of assembly, heteromultimer composed of HisG and HisZ subunits.

It localises to the cytoplasm. It catalyses the reaction 1-(5-phospho-beta-D-ribosyl)-ATP + diphosphate = 5-phospho-alpha-D-ribose 1-diphosphate + ATP. The protein operates within amino-acid biosynthesis; L-histidine biosynthesis; L-histidine from 5-phospho-alpha-D-ribose 1-diphosphate: step 1/9. Its function is as follows. Catalyzes the condensation of ATP and 5-phosphoribose 1-diphosphate to form N'-(5'-phosphoribosyl)-ATP (PR-ATP). Has a crucial role in the pathway because the rate of histidine biosynthesis seems to be controlled primarily by regulation of HisG enzymatic activity. This chain is ATP phosphoribosyltransferase, found in Streptococcus gordonii (strain Challis / ATCC 35105 / BCRC 15272 / CH1 / DL1 / V288).